Reading from the N-terminus, the 157-residue chain is MNKVPMTGEGFASLKEELRWRQQEERPRIIEAISEARSHGDLSENAEYHAAKEAQSLNEGRVNELEDLIARAEVIDVTKLSGDKVKFGATVVLVDEDTEEKKTYQIVGDQEADVKSGRISISSPIARALIGKEVGDAIEVNAPGGARGYEIVQVQFI.

The protein belongs to the GreA/GreB family.

Functionally, necessary for efficient RNA polymerase transcription elongation past template-encoded arresting sites. The arresting sites in DNA have the property of trapping a certain fraction of elongating RNA polymerases that pass through, resulting in locked ternary complexes. Cleavage of the nascent transcript by cleavage factors such as GreA or GreB allows the resumption of elongation from the new 3'terminus. GreA releases sequences of 2 to 3 nucleotides. The protein is Transcription elongation factor GreA of Mesorhizobium japonicum (strain LMG 29417 / CECT 9101 / MAFF 303099) (Mesorhizobium loti (strain MAFF 303099)).